The primary structure comprises 95 residues: Large ribosomal subunit protein bL25 (95 aa).

Belongs to the bacterial ribosomal protein bL25 family. In terms of assembly, part of the 50S ribosomal subunit; part of the 5S rRNA/L5/L18/L25 subcomplex. Contacts the 5S rRNA. Binds to the 5S rRNA independently of L5 and L18.

This is one of the proteins that binds to the 5S RNA in the ribosome where it forms part of the central protuberance. The polypeptide is Large ribosomal subunit protein bL25 (Chromobacterium violaceum (strain ATCC 12472 / DSM 30191 / JCM 1249 / CCUG 213 / NBRC 12614 / NCIMB 9131 / NCTC 9757 / MK)).